Here is a 278-residue protein sequence, read N- to C-terminus: Shikimate dehydrogenase (NADP(+)) (278 aa).

Shikimate contacts are provided by residues Ser19–Ser21 and Thr66. Lys70 acts as the Proton acceptor in catalysis. Asp82 serves as a coordination point for NADP(+). Shikimate-binding residues include Asn91 and Asp107. Residues Gly133 to Ala137, Asn157 to Arg162, and Ile222 contribute to the NADP(+) site. Tyr224 provides a ligand contact to shikimate. Gly245 contributes to the NADP(+) binding site.

Belongs to the shikimate dehydrogenase family. In terms of assembly, homodimer.

It carries out the reaction shikimate + NADP(+) = 3-dehydroshikimate + NADPH + H(+). It participates in metabolic intermediate biosynthesis; chorismate biosynthesis; chorismate from D-erythrose 4-phosphate and phosphoenolpyruvate: step 4/7. Its function is as follows. Involved in the biosynthesis of the chorismate, which leads to the biosynthesis of aromatic amino acids. Catalyzes the reversible NADPH linked reduction of 3-dehydroshikimate (DHSA) to yield shikimate (SA). This is Shikimate dehydrogenase (NADP(+)) from Jannaschia sp. (strain CCS1).